A 343-amino-acid polypeptide reads, in one-letter code: Holliday junction branch migration complex subunit RuvB (343 aa).

The segment at 1-186 (MTEEFDIRQE…FGINLHLEYY (186 aa)) is large ATPase domain (RuvB-L). ATP-binding positions include Leu25, Arg26, Gly67, Lys70, Thr71, Thr72, 133–135 (EDY), Arg176, Tyr186, and Arg223. Residue Thr71 participates in Mg(2+) binding. Residues 187 to 257 (DVHTITGIVE…IACYALEALN (71 aa)) form a small ATPAse domain (RuvB-S) region. The head domain (RuvB-H) stretch occupies residues 260 to 343 (RYGLDNVDHK…PRPHRPSLFD (84 aa)). DNA-binding residues include Arg315 and Arg320.

It belongs to the RuvB family. In terms of assembly, homohexamer. Forms an RuvA(8)-RuvB(12)-Holliday junction (HJ) complex. HJ DNA is sandwiched between 2 RuvA tetramers; dsDNA enters through RuvA and exits via RuvB. An RuvB hexamer assembles on each DNA strand where it exits the tetramer. Each RuvB hexamer is contacted by two RuvA subunits (via domain III) on 2 adjacent RuvB subunits; this complex drives branch migration. In the full resolvosome a probable DNA-RuvA(4)-RuvB(12)-RuvC(2) complex forms which resolves the HJ.

It is found in the cytoplasm. It catalyses the reaction ATP + H2O = ADP + phosphate + H(+). Its function is as follows. The RuvA-RuvB-RuvC complex processes Holliday junction (HJ) DNA during genetic recombination and DNA repair, while the RuvA-RuvB complex plays an important role in the rescue of blocked DNA replication forks via replication fork reversal (RFR). RuvA specifically binds to HJ cruciform DNA, conferring on it an open structure. The RuvB hexamer acts as an ATP-dependent pump, pulling dsDNA into and through the RuvAB complex. RuvB forms 2 homohexamers on either side of HJ DNA bound by 1 or 2 RuvA tetramers; 4 subunits per hexamer contact DNA at a time. Coordinated motions by a converter formed by DNA-disengaged RuvB subunits stimulates ATP hydrolysis and nucleotide exchange. Immobilization of the converter enables RuvB to convert the ATP-contained energy into a lever motion, pulling 2 nucleotides of DNA out of the RuvA tetramer per ATP hydrolyzed, thus driving DNA branch migration. The RuvB motors rotate together with the DNA substrate, which together with the progressing nucleotide cycle form the mechanistic basis for DNA recombination by continuous HJ branch migration. Branch migration allows RuvC to scan DNA until it finds its consensus sequence, where it cleaves and resolves cruciform DNA. In Porphyromonas gingivalis (strain ATCC BAA-308 / W83), this protein is Holliday junction branch migration complex subunit RuvB.